Here is a 21-residue protein sequence, read N- to C-terminus: DYE-linked aldehyde dehydrogenase, gamma chain (21 aa).

In terms of assembly, heterotetramer composed of an alpha, a beta and two gamma chains. [2Fe-2S] cluster is required as a cofactor.

Active with aldehydes and formate esters as substrates. This chain is DYE-linked aldehyde dehydrogenase, gamma chain, found in Amycolatopsis methanolica.